The chain runs to 1231 residues: Cohesin subunit SA-2 (1231 aa).

Residue Met1 is modified to N-acetylmethionine. A disordered region spans residues 1–75; the sequence is MIAAPEIPTD…GSNRMNGHHQ (75 aa). A compositionally biased stretch (basic residues) spans 36-48; sequence KQGKGKTCKKGKK. Residues 293–378 enclose the SCD domain; sequence FVHRYRDAIA…SRFKDRIVSM (86 aa). Residue Lys607 is modified to N6-acetyllysine. Phosphoserine is present on residues Ser1058, Ser1061, Ser1064, and Ser1065. Positions 1062–1087 are disordered; sequence GMSSRGSTVRSKKSKPSTGKRKVVEG. The span at 1071 to 1082 shows a compositional bias: basic residues; that stretch reads RSKKSKPSTGKR. Thr1112 bears the Phosphothreonine mark. Phosphoserine occurs at positions 1177 and 1178.

Belongs to the SCC3 family. As to quaternary structure, interacts directly with RAD21 in cohesin complex. Cohesin complexes are composed of a heterodimer between a SMC1 protein (SMC1A or SMC1B) and SMC3, which are attached via their hinge domain, and RAD21 which link them at their heads, and one STAG protein (STAG1, STAG2 or STAG3). In cohesin complexes, STAG2 is mutually exclusive with STAG1 and STAG3. In terms of processing, phosphorylated by PLK1. The large dissociation of cohesin from chromosome arms during prophase is partly due to its phosphorylation.

It localises to the nucleus. It is found in the chromosome. Its subcellular location is the centromere. Functionally, component of cohesin complex, a complex required for the cohesion of sister chromatids after DNA replication. The cohesin complex apparently forms a large proteinaceous ring within which sister chromatids can be trapped. At anaphase, the complex is cleaved and dissociates from chromatin, allowing sister chromatids to segregate. The cohesin complex may also play a role in spindle pole assembly during mitosis. The protein is Cohesin subunit SA-2 (Stag2) of Mus musculus (Mouse).